The sequence spans 280 residues: 2,3,4,5-tetrahydropyridine-2,6-dicarboxylate N-succinyltransferase (280 aa).

2 residues coordinate substrate: Arg-109 and Asp-146.

The protein belongs to the transferase hexapeptide repeat family. Homotrimer.

It is found in the cytoplasm. The enzyme catalyses (S)-2,3,4,5-tetrahydrodipicolinate + succinyl-CoA + H2O = (S)-2-succinylamino-6-oxoheptanedioate + CoA. Its pathway is amino-acid biosynthesis; L-lysine biosynthesis via DAP pathway; LL-2,6-diaminopimelate from (S)-tetrahydrodipicolinate (succinylase route): step 1/3. The polypeptide is 2,3,4,5-tetrahydropyridine-2,6-dicarboxylate N-succinyltransferase (Blochmanniella floridana).